Here is a 421-residue protein sequence, read N- to C-terminus: 4-hydroxy-3-methylbut-2-en-1-yl diphosphate synthase (flavodoxin) (421 aa).

The [4Fe-4S] cluster site is built by cysteine 311, cysteine 314, cysteine 357, and glutamate 364.

It belongs to the IspG family. [4Fe-4S] cluster is required as a cofactor.

The enzyme catalyses (2E)-4-hydroxy-3-methylbut-2-enyl diphosphate + oxidized [flavodoxin] + H2O + 2 H(+) = 2-C-methyl-D-erythritol 2,4-cyclic diphosphate + reduced [flavodoxin]. It participates in isoprenoid biosynthesis; isopentenyl diphosphate biosynthesis via DXP pathway; isopentenyl diphosphate from 1-deoxy-D-xylulose 5-phosphate: step 5/6. Functionally, converts 2C-methyl-D-erythritol 2,4-cyclodiphosphate (ME-2,4cPP) into 1-hydroxy-2-methyl-2-(E)-butenyl 4-diphosphate. The chain is 4-hydroxy-3-methylbut-2-en-1-yl diphosphate synthase (flavodoxin) from Stenotrophomonas maltophilia (strain K279a).